A 1098-amino-acid chain; its full sequence is Probable arabinosyltransferase B (1098 aa).

12 helical membrane passes run 28-50, 217-239, 271-293, 402-419, 434-456, 472-494, 541-558, 570-587, 597-619, 626-648, 663-685, and 698-720; these read WVAT…LPVV, LKLL…LWRL, ASWR…WHVI, LRPE…YVLI, AVVT…AALV, LVGT…TVVF, FGFL…FIML, PAWR…FLMF, GLFA…PSVL, MAFL…GWWY, IDGI…YAAW, and LIRA…VFVA.

It belongs to the emb family.

It localises to the cell membrane. Its function is as follows. Arabinosyl transferase responsible for the polymerization of arabinose into the arabinan of arabinogalactan. This chain is Probable arabinosyltransferase B (embB), found in Mycobacterium bovis (strain ATCC BAA-935 / AF2122/97).